We begin with the raw amino-acid sequence, 159 residues long: Eukaryotic translation initiation factor 5A (159 aa).

The residue at position 55 (Lys55) is a Hypusine.

The protein belongs to the eIF-5A family. In terms of processing, lys-55 undergoes hypusination, a unique post-translational modification that consists in the addition of a butylamino group from spermidine to lysine side chain, leading to the formation of the unusual amino acid hypusine. eIF-5As are the only known proteins to undergo this modification, which is essential for their function.

Its subcellular location is the cytoplasm. Translation factor that promotes translation elongation and termination, particularly upon ribosome stalling at specific amino acid sequence contexts. Binds between the exit (E) and peptidyl (P) site of the ribosome and promotes rescue of stalled ribosome: specifically required for efficient translation of polyproline-containing peptides as well as other motifs that stall the ribosome. Acts as a ribosome quality control (RQC) cofactor by joining the RQC complex to facilitate peptidyl transfer during CAT tailing step. This Dictyostelium discoideum (Social amoeba) protein is Eukaryotic translation initiation factor 5A (eif5a).